The sequence spans 103 residues: Large ribosomal subunit protein bL21 (103 aa).

It belongs to the bacterial ribosomal protein bL21 family. In terms of assembly, part of the 50S ribosomal subunit. Contacts protein L20.

This protein binds to 23S rRNA in the presence of protein L20. This is Large ribosomal subunit protein bL21 from Mycobacterium marinum (strain ATCC BAA-535 / M).